A 142-amino-acid chain; its full sequence is MKFSAAAVLAAAAGAHAWSNVTYTTEIVTAVTTYCPGPTEITHGGNTYTVTEATTLTISDCPCTVTKPIITTSSVICHSCTGYVNSTIPAPTSAGSVGTGSAPAVVTPTVSPSEVPTAGAGKAAALSGAGLVGVLGLAAILL.

It belongs to the SED1 family.

The sequence is that of Clock-controlled protein 6 (ccg-6) from Neurospora crassa (strain ATCC 24698 / 74-OR23-1A / CBS 708.71 / DSM 1257 / FGSC 987).